Consider the following 365-residue polypeptide: 3-dehydroquinate synthase (365 aa).

NAD(+)-binding positions include 106-110, 130-131, Lys-142, Lys-151, and 169-172; these read GVIGD, TT, and FFAT. Residues Glu-184, His-247, and His-264 each coordinate Zn(2+).

This sequence belongs to the sugar phosphate cyclases superfamily. Dehydroquinate synthase family. Co(2+) is required as a cofactor. Zn(2+) serves as cofactor. It depends on NAD(+) as a cofactor.

The protein resides in the cytoplasm. The catalysed reaction is 7-phospho-2-dehydro-3-deoxy-D-arabino-heptonate = 3-dehydroquinate + phosphate. It participates in metabolic intermediate biosynthesis; chorismate biosynthesis; chorismate from D-erythrose 4-phosphate and phosphoenolpyruvate: step 2/7. Catalyzes the conversion of 3-deoxy-D-arabino-heptulosonate 7-phosphate (DAHP) to dehydroquinate (DHQ). The chain is 3-dehydroquinate synthase from Listeria welshimeri serovar 6b (strain ATCC 35897 / DSM 20650 / CCUG 15529 / CIP 8149 / NCTC 11857 / SLCC 5334 / V8).